Reading from the N-terminus, the 399-residue chain is Lovastatin esterase (399 aa).

Residue Ser57 is the Nucleophile of the active site. Catalysis depends on proton acceptor residues Lys60 and Tyr170.

It belongs to the class-A beta-lactamase family.

It carries out the reaction lovastatin + H2O = monacolin J + (S)-2-methylbutanoate + H(+). It catalyses the reaction pravastatin lactone + H2O = pravastatin diol lactone + (S)-2-methylbutanoate + H(+). The enzyme catalyses mevastatin + H2O = compactin diol lactone + (S)-2-methylbutanoate + H(+). Functionally, esterase that can hydrolyze the side chain of lovastatin to produce monacolin J. Is also able to hydrolyze the side chains of mevastatin and pravastatin, but not simvastatin. This is Lovastatin esterase from Penicillium rubens (strain ATCC 28089 / DSM 1075 / NRRL 1951 / Wisconsin 54-1255) (Penicillium chrysogenum).